A 266-amino-acid chain; its full sequence is MALVKGKVNINEFIDLSKSEKFLPSMFTPVKSVMISKVDKILVHEDESLSEVNLLKGVKLIDGGYVHLAGLVVTGEWNLPDNCRGGVSVCLVDKRMERADEATLASYYTAAAKKRFQFKVVPNYNITTKDAEKAVWQVLVNIRNVKIAAGYCPLSLEFVSVCIVYKNIIKLGLREKITSVTDGGPMELSEEVVDEFMEEVPMSVRLAKFRSKTGKKFSSKSENNSGNNRPKPDKNQRKEKGLKVRVEKDNLIDNELETYVADSDSY.

The segment at 211–244 (SKTGKKFSSKSENNSGNNRPKPDKNQRKEKGLKV) is disordered. Positions 230–244 (PKPDKNQRKEKGLKV) are enriched in basic and acidic residues.

The protein belongs to the tobamovirus movement protein family. Binds to host RBCS at the plasmodesmata; this interaction seems required for viral systemic movement.

The protein localises to the host cytoplasm. The protein resides in the host cytoskeleton. Its subcellular location is the host cell junction. It localises to the host plasmodesma. Functionally, transports viral genome to neighboring plant cells directly through plasmosdesmata, without any budding. The movement protein allows efficient cell to cell propagation, by bypassing the host cell wall barrier. Forms a ribonucleoprotein complex with viral RNA. Binds microtubules and modulates microtubule stability. Can bind double-stranded DNA. Evades host resistance (R) protein (e.g. tomato ToMV resistance protein TM-2(2), AC Q71BG9) in ToMV/TMV resistant plants. The sequence is that of Movement protein (MP) from Tomato brown rugose fruit virus (isolate TOBRFV/Tomato/Jordan/Tom1-Jo/2015) (ToBRFV).